The following is a 135-amino-acid chain: Flagellar assembly factor FliW 2 (135 aa).

The protein belongs to the FliW family. Interacts with translational regulator CsrA and flagellin(s).

Its subcellular location is the cytoplasm. Functionally, acts as an anti-CsrA protein, binds CsrA and prevents it from repressing translation of its target genes, one of which is flagellin. Binds to flagellin and participates in the assembly of the flagellum. This chain is Flagellar assembly factor FliW 2, found in Helicobacter acinonychis (strain Sheeba).